Reading from the N-terminus, the 690-residue chain is Kelch-like protein 8 (690 aa).

The BTB domain occupies 111–178; it reads CDVELLVAGS…IYTDKIAITM (68 aa). A BACK domain is found at 213 to 314; sequence CMSLYHFSDI…VGWNFLCEAV (102 aa). Kelch repeat units follow at residues 383–430, 431–477, 478–524, 525–571, 572–618, and 620–665; these read AIFC…SANG, NLYA…SIEN, VIYA…VIGR, YLFA…VLDG, YLYA…ALGG, and VYAI…WANV.

Component of the BCR(kel-8) E3 ubiquitin ligase complex, at least composed of cul-3, kel-8 and rbx-1. Interacts with rpy-1. As to expression, expressed in neurons.

It localises to the synapse. Its pathway is protein modification; protein ubiquitination. Its function is as follows. Substrate-specific adapter of a BCR (BTB-CUL3-RBX1) E3 ubiquitin ligase complex that regulates degradation of glutamate receptors in neurons. The BCR(kel-8) ubiquitin ligase complex mediates ubiquitination and subsequent degradation of rpy-1. Indirectly regulates the protein turnover of glr-1, possibly via ubiquitination and degradation of rpy-1. The polypeptide is Kelch-like protein 8 (kel-8) (Caenorhabditis elegans).